A 342-amino-acid chain; its full sequence is N-alpha-acetyl-L-2,4-diaminobutyric acid deacetylase (342 aa).

The segment at 103–124 is disordered; it reads TAGRRTSPMDGGNLNRSFPGDP.

It belongs to the DoeB deacetylase family. The cofactor is Zn(2+).

It localises to the cytoplasm. It catalyses the reaction (2S)-2-acetamido-4-aminobutanoate + H2O = L-2,4-diaminobutanoate + acetate. Functionally, involved in the degradation of ectoine, which allows H.elongata to utilize ectoine as both a carbon and a nitrogen source for growth. Catalyzes the deacetylation of N-alpha-acetyl-L-2,4-diaminobutyrate (N-alpha-Ac-DABA) to yield L-2,4-diaminobutyrate (DABA). The chain is N-alpha-acetyl-L-2,4-diaminobutyric acid deacetylase from Halomonas elongata (strain ATCC 33173 / DSM 2581 / NBRC 15536 / NCIMB 2198 / 1H9).